A 142-amino-acid polypeptide reads, in one-letter code: Large ribosomal subunit protein uL13 (142 aa).

Belongs to the universal ribosomal protein uL13 family. As to quaternary structure, part of the 50S ribosomal subunit.

In terms of biological role, this protein is one of the early assembly proteins of the 50S ribosomal subunit, although it is not seen to bind rRNA by itself. It is important during the early stages of 50S assembly. The sequence is that of Large ribosomal subunit protein uL13 from Aromatoleum aromaticum (strain DSM 19018 / LMG 30748 / EbN1) (Azoarcus sp. (strain EbN1)).